The sequence spans 81 residues: MSHSVKIYDTCIGCTQCVRACPLDVLEMVPWDGCKAGQIAASPRTEDCVGCKRCETACPTDFLSIRVYLGAETTRSMGLAY.

2 4Fe-4S ferredoxin-type domains span residues 2 to 31 (SHSVKIYDTCIGCTQCVRACPLDVLEMVPW) and 39 to 68 (IAASPRTEDCVGCKRCETACPTDFLSIRVY). 8 residues coordinate [4Fe-4S] cluster: Cys11, Cys14, Cys17, Cys21, Cys48, Cys51, Cys54, and Cys58.

In terms of assembly, the cyanobacterial PSI reaction center is composed of one copy each of PsaA,B,C,D,E,F,I,J,K,L,M and X, and forms trimeric complexes. Requires [4Fe-4S] cluster as cofactor.

The protein resides in the cellular thylakoid membrane. It catalyses the reaction reduced [plastocyanin] + hnu + oxidized [2Fe-2S]-[ferredoxin] = oxidized [plastocyanin] + reduced [2Fe-2S]-[ferredoxin]. Functionally, apoprotein for the two 4Fe-4S centers FA and FB of photosystem I (PSI); essential for photochemical activity. FB is the terminal electron acceptor of PSI, donating electrons to ferredoxin. The C-terminus interacts with PsaA/B/D and helps assemble the protein into the PSI complex. Required for binding of PsaD and PsaE to PSI. PSI is a plastocyanin/cytochrome c6-ferredoxin oxidoreductase, converting photonic excitation into a charge separation, which transfers an electron from the donor P700 chlorophyll pair to the spectroscopically characterized acceptors A0, A1, FX, FA and FB in turn. In Synechococcus elongatus (strain ATCC 33912 / PCC 7942 / FACHB-805) (Anacystis nidulans R2), this protein is Photosystem I iron-sulfur center.